Here is a 291-residue protein sequence, read N- to C-terminus: Undecaprenyl-diphosphatase (291 aa).

The next 8 helical transmembrane spans lie at 1–21, 48–68, 102–122, 126–146, 162–182, 203–223, 231–251, and 267–287; these read MFIIELIKGIILGVVEGLTEF, SAFTFKIVIQLGSVFAAAWVF, LHVLVGMVPAGILGLLFDDFI, LFSVPTVMIGLFVGAIYMIIA, INYFQAFVIGISQAVAMWPGF, SDFTFIMAVPIMLAASGLSLL, IADIPFYILGFLAAFTVGLIA, and FAIYRIVLVIFIAILYFGFGI.

It belongs to the UppP family.

Its subcellular location is the cell membrane. The catalysed reaction is di-trans,octa-cis-undecaprenyl diphosphate + H2O = di-trans,octa-cis-undecaprenyl phosphate + phosphate + H(+). In terms of biological role, catalyzes the dephosphorylation of undecaprenyl diphosphate (UPP). Confers resistance to bacitracin. The sequence is that of Undecaprenyl-diphosphatase from Staphylococcus aureus (strain Mu3 / ATCC 700698).